The sequence spans 305 residues: UDP-3-O-acyl-N-acetylglucosamine deacetylase (305 aa).

Residues histidine 78, histidine 237, and aspartate 241 each coordinate Zn(2+). The Proton donor role is filled by histidine 264.

Belongs to the LpxC family. The cofactor is Zn(2+).

The enzyme catalyses a UDP-3-O-[(3R)-3-hydroxyacyl]-N-acetyl-alpha-D-glucosamine + H2O = a UDP-3-O-[(3R)-3-hydroxyacyl]-alpha-D-glucosamine + acetate. Its pathway is glycolipid biosynthesis; lipid IV(A) biosynthesis; lipid IV(A) from (3R)-3-hydroxytetradecanoyl-[acyl-carrier-protein] and UDP-N-acetyl-alpha-D-glucosamine: step 2/6. Functionally, catalyzes the hydrolysis of UDP-3-O-myristoyl-N-acetylglucosamine to form UDP-3-O-myristoylglucosamine and acetate, the committed step in lipid A biosynthesis. The protein is UDP-3-O-acyl-N-acetylglucosamine deacetylase of Cupriavidus pinatubonensis (strain JMP 134 / LMG 1197) (Cupriavidus necator (strain JMP 134)).